A 267-amino-acid chain; its full sequence is Small ribosomal subunit protein uS2 (267 aa).

Residues 247–267 (LEDDILEDVEDEEEGDPEQGE) form a disordered region.

The protein belongs to the universal ribosomal protein uS2 family.

The polypeptide is Small ribosomal subunit protein uS2 (Synechococcus sp. (strain JA-3-3Ab) (Cyanobacteria bacterium Yellowstone A-Prime)).